We begin with the raw amino-acid sequence, 262 residues long: Tryptophan synthase alpha chain (262 aa).

Active-site proton acceptor residues include Glu-48 and Asp-59.

It belongs to the TrpA family. In terms of assembly, tetramer of two alpha and two beta chains.

The catalysed reaction is (1S,2R)-1-C-(indol-3-yl)glycerol 3-phosphate + L-serine = D-glyceraldehyde 3-phosphate + L-tryptophan + H2O. The protein operates within amino-acid biosynthesis; L-tryptophan biosynthesis; L-tryptophan from chorismate: step 5/5. In terms of biological role, the alpha subunit is responsible for the aldol cleavage of indoleglycerol phosphate to indole and glyceraldehyde 3-phosphate. The sequence is that of Tryptophan synthase alpha chain from Helicobacter pylori (strain HPAG1).